The primary structure comprises 322 residues: Major serine/threonine-protein phosphatase PP2A-2 catalytic subunit (322 aa).

Residues aspartate 70, histidine 72, aspartate 98, and asparagine 130 each coordinate Mn(2+). Histidine 131 functions as the Proton donor in the catalytic mechanism. Residues histidine 180 and histidine 254 each contribute to the Mn(2+) site. Leucine 322 carries the post-translational modification Leucine methyl ester.

It belongs to the PPP phosphatase family. PP-2A subfamily. The cofactor is Mn(2+).

It carries out the reaction O-phospho-L-seryl-[protein] + H2O = L-seryl-[protein] + phosphate. The enzyme catalyses O-phospho-L-threonyl-[protein] + H2O = L-threonyl-[protein] + phosphate. Functionally, essential role in cell cycle control. PP2A may be involved in controlling the entry into mitosis, possibly acting as an inhibitor. The chain is Major serine/threonine-protein phosphatase PP2A-2 catalytic subunit (ppa2) from Schizosaccharomyces pombe (strain 972 / ATCC 24843) (Fission yeast).